Reading from the N-terminus, the 460-residue chain is Argininosuccinate lyase (460 aa).

It belongs to the lyase 1 family. Argininosuccinate lyase subfamily.

It localises to the cytoplasm. It carries out the reaction 2-(N(omega)-L-arginino)succinate = fumarate + L-arginine. It participates in amino-acid biosynthesis; L-arginine biosynthesis; L-arginine from L-ornithine and carbamoyl phosphate: step 3/3. This Nitratidesulfovibrio vulgaris (strain ATCC 29579 / DSM 644 / CCUG 34227 / NCIMB 8303 / VKM B-1760 / Hildenborough) (Desulfovibrio vulgaris) protein is Argininosuccinate lyase.